The sequence spans 139 residues: Small ribosomal subunit protein uS11 (139 aa).

The disordered stretch occupies residues 1 to 33 (MPPAKKGPATSARKGQKTRRREKKNVPHGAAHI). The segment covering 14–23 (KGQKTRRREK) has biased composition (basic residues).

The protein belongs to the universal ribosomal protein uS11 family. As to quaternary structure, part of the 30S ribosomal subunit. Interacts with proteins S7 and S18. Binds to IF-3.

Its function is as follows. Located on the platform of the 30S subunit, it bridges several disparate RNA helices of the 16S rRNA. Forms part of the Shine-Dalgarno cleft in the 70S ribosome. In Mycobacterium bovis (strain ATCC BAA-935 / AF2122/97), this protein is Small ribosomal subunit protein uS11.